The primary structure comprises 285 residues: Protease HtpX homolog (285 aa).

The next 2 membrane-spanning stretches (helical) occupy residues 7–27 (TAMLMAAITALFIVIGGMIGG) and 30–50 (GMTIALLFALGMNFFSYWFSD). Position 131 (H131) interacts with Zn(2+). E132 is an active-site residue. Position 135 (H135) interacts with Zn(2+). 2 helical membrane-spanning segments follow: residues 146 to 166 (ITATMAGAISALANFAMFFGG) and 177 to 197 (IAGIAVALLAPIAGALIQMAI). Residue E202 coordinates Zn(2+).

It belongs to the peptidase M48B family. Zn(2+) is required as a cofactor.

Its subcellular location is the cell inner membrane. The polypeptide is Protease HtpX homolog (Burkholderia cenocepacia (strain ATCC BAA-245 / DSM 16553 / LMG 16656 / NCTC 13227 / J2315 / CF5610) (Burkholderia cepacia (strain J2315))).